Reading from the N-terminus, the 252-residue chain is ELH type 2 (252 aa).

The signal sequence occupies residues 1 to 19 (AISLLMCLILSALCASSES). 3 consecutive propeptides follow at residues 20-75 (AVVH…VNNE), 92-130 (PQEV…QREL), and 144-185 (AAGD…SGIA). A compositionally biased stretch (basic and acidic residues) spans 145-161 (AGDEDKAEEHNPETESH). The tract at residues 145 to 171 (AGDEDKAEEHNPETESHSRRKRSALTP) is disordered. Lysine 222 bears the Lysine amide mark.

The protein belongs to the molluscan ELH family. In terms of tissue distribution, bag cell neurons.

It is found in the secreted. Its function is as follows. ELH acts as a neurotransmitter locally, upon neurons of the abdominal ganglion and as a hormone by diffusing into the circulating hemolymph and modulating the activity of other organs. It specifically causes contraction of smooth muscle in the ovotestis and expulsion of the egg string. In terms of biological role, alpha-BCP decreases the activity of a cluster of neurons in the left upper quadrant of the abdominal ganglion. Functionally, beta-BCP specifically excites 2 neurons, L1 and R1, in the abdominal ganglion. In Aplysia parvula (Dwarf sea hare), this protein is ELH type 2 (ELH2).